We begin with the raw amino-acid sequence, 460 residues long: Putative RNA-guided DNA endonuclease MT2953 (460 aa).

Catalysis depends on residues Asp224 and Glu313. Positions 372, 375, 389, and 392 each coordinate Zn(2+). Asp399 is an active-site residue. Residues 415–460 (VVGPVGAAVKRGADRKTGPGPAGGREARKATGHPAGEQPRDGVQVK) form a disordered region.

This sequence in the N-terminal section; belongs to the transposase 2 family. It in the C-terminal section; belongs to the transposase 35 family.

In terms of biological role, an RNA-guided dsDNA endonuclease. When guided by an RNA derived from the right-end element of its insertion sequence element (IS), cleaves DNA downstream of the transposon-associated motif (TAM). Cleaves supercoiled and linear DNA in a staggered manner 15-21 bases from the TAM yielding 5'-overhangs. Binds reRNA, an approximately 150 nucleotide base sRNA derived from the 3' end of its own gene, the right end (RE) of the insertion sequence (IS) plus sequence downstream of the IS. The sequence is that of Putative RNA-guided DNA endonuclease MT2953 from Mycobacterium tuberculosis (strain CDC 1551 / Oshkosh).